The primary structure comprises 629 residues: tRNA uridine 5-carboxymethylaminomethyl modification enzyme MnmG (629 aa).

FAD-binding positions include 13 to 18 (GGGHAG), V125, and S180. NAD(+) is bound at residue 273-287 (GPRYCPSIEDKVMRF). Q370 serves as a coordination point for FAD.

The protein belongs to the MnmG family. As to quaternary structure, homodimer. Heterotetramer of two MnmE and two MnmG subunits. Requires FAD as cofactor.

It is found in the cytoplasm. In terms of biological role, NAD-binding protein involved in the addition of a carboxymethylaminomethyl (cmnm) group at the wobble position (U34) of certain tRNAs, forming tRNA-cmnm(5)s(2)U34. The chain is tRNA uridine 5-carboxymethylaminomethyl modification enzyme MnmG from Salmonella paratyphi A (strain ATCC 9150 / SARB42).